Here is a 192-residue protein sequence, read N- to C-terminus: Ribosome maturation factor RimM (192 aa).

Residues 116–192 (PGEYYWVDLI…RIIVDWQPDY (77 aa)) form the PRC barrel domain.

The protein belongs to the RimM family. Binds ribosomal protein uS19.

It is found in the cytoplasm. In terms of biological role, an accessory protein needed during the final step in the assembly of 30S ribosomal subunit, possibly for assembly of the head region. Essential for efficient processing of 16S rRNA. May be needed both before and after RbfA during the maturation of 16S rRNA. It has affinity for free ribosomal 30S subunits but not for 70S ribosomes. The sequence is that of Ribosome maturation factor RimM from Verminephrobacter eiseniae (strain EF01-2).